Here is a 293-residue protein sequence, read N- to C-terminus: Nucleotide-binding protein CKR_3143 (293 aa).

8–15 is a binding site for ATP; that stretch reads GLSGAGKT. GTP is bound at residue 59–62; sequence DIRG.

The protein belongs to the RapZ-like family.

Functionally, displays ATPase and GTPase activities. The sequence is that of Nucleotide-binding protein CKR_3143 from Clostridium kluyveri (strain NBRC 12016).